The sequence spans 637 residues: MIAIQLPDGSRREFDGPVTVAEVAASIGAGLAKAALAGRIGTGDAARLVDTSHRIEADEALSIITAKDAAGLDVIRHSTAHLLAYAVKELFPDAQVTIGPTIENGFFYDFSYKRPFTPDDLAAIEKKMGDLAAKDEPVVRSVMPRDEAVSYFKSIGEAYKAEIIESIPADQAVSLYAEGKFTDLCRGPHVPSTGKLKFFKLMKVAGAYWRGDHRNEMLQRIYGTAWATKDDLQKYLVMLEEAEKRDHRKLGRELDLFHIDEHAPGVVFWHPKGWTVWQQVEQYMRRVYRDNGYQEVKGPQILDKGLWEKTGHWDKYRDNMFTTESEKRDYALKPMNCPGHILIFKQGIKSYRDLPLRYGEFGQCHRNEPSGGLHGIMRVRGFTQDDGHIFCTEDQILPECDAFTTLLQKVYADFGFTEILYKVATRPEKRIGSDELWDKAEAALIASLRNSGCEFEISPGEGAFYGPKVEYTLKDALGRHWQCGTIQVDFSLPERLDAEYVAESGERLHPVMLHRAILGSLERFIGILIEEHAGALPFWLAPTQVSVLNITDGQADYARDVARSLQKQGLRVALDLRNEKITYKIREHSLQKVPYLIVVGDKERASGAVAVRARGNQDLGVMALEAFSQKLAAELAT.

Positions 1 to 65 (MIAIQLPDGS…EADEALSIIT (65 aa)) constitute a TGS domain. Residues 246 to 537 (DHRKLGRELD…LIEEHAGALP (292 aa)) form a catalytic region. Zn(2+) contacts are provided by Cys-337, His-388, and His-514.

Belongs to the class-II aminoacyl-tRNA synthetase family. In terms of assembly, homodimer. Requires Zn(2+) as cofactor.

It localises to the cytoplasm. The catalysed reaction is tRNA(Thr) + L-threonine + ATP = L-threonyl-tRNA(Thr) + AMP + diphosphate + H(+). In terms of biological role, catalyzes the attachment of threonine to tRNA(Thr) in a two-step reaction: L-threonine is first activated by ATP to form Thr-AMP and then transferred to the acceptor end of tRNA(Thr). Also edits incorrectly charged L-seryl-tRNA(Thr). The polypeptide is Threonine--tRNA ligase (Leptothrix cholodnii (strain ATCC 51168 / LMG 8142 / SP-6) (Leptothrix discophora (strain SP-6))).